Consider the following 148-residue polypeptide: Caltractin (148 aa).

EF-hand domains are found at residues 4 to 39 (EQKQEXREAFDLFDTDGSGTIDAKELKVXMXALGFE), 40 to 75 (PKKEEIQKMISDIDKDGSGTIDFEEFLQMMTAKMGE), 77 to 112 (DSREEIMKAFRLFDDDQTGKITFKNLKRVAKELGEN), and 113 to 148 (LTDEEIQEMIDEADRDGDGEINEEEFFRIMKKTSLF). The Ca(2+) site is built by D17, D19, S21, T23, E28, D53, D55, S57, T59, and E64. Ca(2+) contacts are provided by D126, D128, D130, E132, and E137.

It belongs to the centrin family. As to expression, ubiquitous.

In terms of biological role, this calcium-binding protein is found in the basal body complexes (the functional homolog of the centrosome in animal cell). In mitotic cells it is specifically associated with the poles of the mitotic spindles at the sites of the duplicated basal body complexes. The sequence is that of Caltractin from Spermatozopsis similis (Green alga).